The sequence spans 962 residues: Leucine--tRNA ligase (962 aa).

Residues 40–51 carry the 'HIGH' region motif; it reads PYPSGAGLHVGH. The tract at residues 548–570 is disordered; sequence SRKLSGQHDEPNSNVTPSAVEGS. The 'KMSKS' region motif lies at 737-741; sequence KMSKS. K740 is a binding site for ATP.

It belongs to the class-I aminoacyl-tRNA synthetase family.

The protein resides in the cytoplasm. It catalyses the reaction tRNA(Leu) + L-leucine + ATP = L-leucyl-tRNA(Leu) + AMP + diphosphate. This chain is Leucine--tRNA ligase, found in Christiangramia forsetii (strain DSM 17595 / CGMCC 1.15422 / KT0803) (Gramella forsetii).